A 116-amino-acid polypeptide reads, in one-letter code: S-adenosylmethionine decarboxylase proenzyme (116 aa).

Catalysis depends on Ser-63, which acts as the Schiff-base intermediate with substrate; via pyruvic acid. A Pyruvic acid (Ser); by autocatalysis modification is found at Ser-63. His-68 serves as the catalytic Proton acceptor; for processing activity. Residue Cys-83 is the Proton donor; for catalytic activity of the active site.

Belongs to the prokaryotic AdoMetDC family. Type 1 subfamily. Heterotetramer of two alpha and two beta chains arranged as a dimer of alpha/beta heterodimers. Pyruvate is required as a cofactor. In terms of processing, is synthesized initially as an inactive proenzyme. Formation of the active enzyme involves a self-maturation process in which the active site pyruvoyl group is generated from an internal serine residue via an autocatalytic post-translational modification. Two non-identical subunits are generated from the proenzyme in this reaction, and the pyruvate is formed at the N-terminus of the alpha chain, which is derived from the carboxyl end of the proenzyme. The post-translation cleavage follows an unusual pathway, termed non-hydrolytic serinolysis, in which the side chain hydroxyl group of the serine supplies its oxygen atom to form the C-terminus of the beta chain, while the remainder of the serine residue undergoes an oxidative deamination to produce ammonia and the pyruvoyl group blocking the N-terminus of the alpha chain.

It carries out the reaction S-adenosyl-L-methionine + H(+) = S-adenosyl 3-(methylsulfanyl)propylamine + CO2. Its pathway is amine and polyamine biosynthesis; S-adenosylmethioninamine biosynthesis; S-adenosylmethioninamine from S-adenosyl-L-methionine: step 1/1. Functionally, catalyzes the decarboxylation of S-adenosylmethionine to S-adenosylmethioninamine (dcAdoMet), the propylamine donor required for the synthesis of the polyamines spermine and spermidine from the diamine putrescine. In Clostridium botulinum (strain 657 / Type Ba4), this protein is S-adenosylmethionine decarboxylase proenzyme.